The chain runs to 92 residues: Phosphoribosyl-ATP pyrophosphatase (92 aa).

This sequence belongs to the PRA-PH family.

Its subcellular location is the cytoplasm. It carries out the reaction 1-(5-phospho-beta-D-ribosyl)-ATP + H2O = 1-(5-phospho-beta-D-ribosyl)-5'-AMP + diphosphate + H(+). Its pathway is amino-acid biosynthesis; L-histidine biosynthesis; L-histidine from 5-phospho-alpha-D-ribose 1-diphosphate: step 2/9. The chain is Phosphoribosyl-ATP pyrophosphatase from Leptospira biflexa serovar Patoc (strain Patoc 1 / ATCC 23582 / Paris).